The primary structure comprises 523 residues: Synaptotagmin-10 (523 aa).

Topologically, residues 1-55 (MSFHKEDGVNSLCQKALHIVTELCFAGQVEWEKCSGIFPRDRGSQGGSSTDISVS) are vesicular. The interval 13 to 35 (CQKALHIVTELCFAGQVEWEKCS) is cysteine motif. A helical membrane pass occupies residues 56 to 76 (LLAVVVSFCGLALLVVSLFVF). At 77–523 (WKLCWPCWKS…CPSPKPPSTP (447 aa)) the chain is on the cytoplasmic side. Thr-136 bears the Phosphothreonine mark. 2 C2 domains span residues 231 to 352 (ICGK…TVWK) and 363 to 496 (DLGE…THWH). Ca(2+) is bound by residues Asp-262, Asp-268, Asp-320, Phe-321, Asp-322, Ser-325, Asp-328, Asp-394, Asp-400, Asp-454, and Asp-456.

It belongs to the synaptotagmin family. In terms of assembly, homodimer; disulfide-linked via the cysteine motif. Can also form heterodimers with SYT3, SYT6, SYT7 and SYT9. Ca(2+) serves as cofactor.

Its subcellular location is the cytoplasmic vesicle. The protein resides in the secretory vesicle membrane. Functionally, ca(2+) sensor specifically required for the Ca(2+)-dependent exocytosis of secretory vesicles containing IGF1 in neurons of the olfactory bulb. Exocytosis of IGF1 is required for sensory perception of smell. Not involved in Ca(2+)-dependent synaptic vesicle exocytosis. Acts through Ca(2+) and phospholipid binding to the C2 domain: Ca(2+) induces binding of the C2-domains to phospholipid membranes and to assembled SNARE-complexes; both actions contribute to triggering exocytosis. The protein is Synaptotagmin-10 (SYT10) of Pongo abelii (Sumatran orangutan).